The chain runs to 494 residues: MAEIEELNDQMKVRREKMENLREAGIDPFGHKFTRTHNSQELHEAYDEKTKEELHELALSGIVAGRLMTKRGKGKVGFAHLQDREGQIQLYVRKDEVGEENYEIFKKADLGDFLGVEGEIMKTDMGELSIKAKKLTFLSKALRPLPEKFHGLTDTETRYRKRYLDLISNKESFNRFVTRSKIISEIRRYMDGRGYLEVETPVLNNEAGGAAARPFYTHHNSLDIDMALRIATELHLKRLIVGGMEKVYELGRVFRNEGMDMTHNPEFTTMESYEAYADFEDIMDLTEGIFQHVAKTVVGQDVLEYDGKEINVGGKFKRVHMVDAIKEVAGVDFWPEMTFEEATALAKEHDIHVEKHFTSVGHIINEFFEKYVEETLIQPTFVFGHPKEISPLAKMNEKDPRFTDRFELFINGKEYANAFSELNDPIDQLERFEAQAKAKELGDDEATGVDYDYVEALEHGMPPTGGLGIGIDRLVMLFTGTTSIRDVLLFPTMK.

Mg(2+) contacts are provided by Glu407 and Glu414.

The protein belongs to the class-II aminoacyl-tRNA synthetase family. Homodimer. It depends on Mg(2+) as a cofactor.

The protein resides in the cytoplasm. It carries out the reaction tRNA(Lys) + L-lysine + ATP = L-lysyl-tRNA(Lys) + AMP + diphosphate. This Lactococcus lactis subsp. lactis (strain IL1403) (Streptococcus lactis) protein is Lysine--tRNA ligase.